Here is a 114-residue protein sequence, read N- to C-terminus: U5-lycotoxin-Ls1a (114 aa).

The first 20 residues, 1–20 (MKYQILFGVVFLTLLSYCYS), serve as a signal peptide directing secretion. Positions 21–45 (EIEDEFENFVDEEMVEADDPFSLAR) are excised as a propeptide. Intrachain disulfides connect cysteine 51–cysteine 66, cysteine 65–cysteine 93, and cysteine 77–cysteine 91.

The protein belongs to the neurotoxin 19 (CSTX) family. 04 (U1-Lctx) subfamily. As to expression, expressed by the venom gland.

The protein localises to the secreted. The sequence is that of U5-lycotoxin-Ls1a from Lycosa singoriensis (Wolf spider).